The sequence spans 464 residues: JmjC domain-containing protein 1 (464 aa).

The JmjC domain occupies 182–349 (LYAKDMHLFR…QMYTALKEQY (168 aa)).

In Schizosaccharomyces pombe (strain 972 / ATCC 24843) (Fission yeast), this protein is JmjC domain-containing protein 1 (jmj1).